The primary structure comprises 84 residues: Dolichol phosphate-mannose biosynthesis regulatory protein (84 aa).

Transmembrane regions (helical) follow at residues 11–31 (LGLVAVSLIIFTYYTAWVILL) and 49–69 (YAVAIPLAAGLLLLLFVGLFI).

The protein belongs to the DPM2 family. Component of the dolichol-phosphate mannose (DPM) synthase complex composed of DPM1, DPM2 and DPM3; in the complex interacts directly with DPM3. Component of the glycosylphosphatidylinositol-N-acetylglucosaminyltransferase (GPI-GnT) complex composed at least by PIGA, PIGC, PIGH, PIGP, PIGQ, PIGY and DPM2. Interacts with PIGA, PIGC and PIGQ.

It localises to the endoplasmic reticulum membrane. Its pathway is protein modification; protein glycosylation. Regulates the biosynthesis of dolichol phosphate-mannose. Regulatory subunit of the dolichol-phosphate mannose (DPM) synthase complex; essential for the ER localization and stable expression of DPM1. Part of the glycosylphosphatidylinositol-N-acetylglucosaminyltransferase (GPI-GnT) complex that catalyzes the transfer of N-acetylglucosamine from UDP-N-acetylglucosamine to phosphatidylinositol and participates in the first step of GPI biosynthesis. May act by regulating the GPI-GNT complex. The sequence is that of Dolichol phosphate-mannose biosynthesis regulatory protein from Homo sapiens (Human).